Here is a 62-residue protein sequence, read N- to C-terminus: UPF0434 protein RHECIAT_CH0004260 (62 aa).

Belongs to the UPF0434 family.

In Rhizobium etli (strain CIAT 652), this protein is UPF0434 protein RHECIAT_CH0004260.